Reading from the N-terminus, the 203-residue chain is 5-formyltetrahydrofolate cyclo-ligase (203 aa).

A2 carries the N-acetylalanine modification. ATP is bound by residues 10–14 and R14; that span reads KRGLR. Substrate contacts are provided by residues L56, E61, and 148-152; that span reads RGKGY. 145-153 contributes to the ATP binding site; that stretch reads RLGRGKGYY. Mg(2+) is bound by residues D154 and D189.

Belongs to the 5-formyltetrahydrofolate cyclo-ligase family. In terms of assembly, monomer. The cofactor is Mg(2+).

The protein resides in the cytoplasm. The catalysed reaction is (6S)-5-formyl-5,6,7,8-tetrahydrofolate + ATP = (6R)-5,10-methenyltetrahydrofolate + ADP + phosphate. Its function is as follows. Contributes to tetrahydrofolate metabolism. Helps regulate carbon flow through the folate-dependent one-carbon metabolic network that supplies carbon for the biosynthesis of purines, thymidine and amino acids. Catalyzes the irreversible conversion of 5-formyltetrahydrofolate (5-CHO-H(4)PteGlu) to yield 5,10-methenyltetrahydrofolate. The protein is 5-formyltetrahydrofolate cyclo-ligase (Mthfs) of Mus musculus (Mouse).